Reading from the N-terminus, the 353-residue chain is MMQPYLRPDLDRLQAYHAPHFPEADKLDANELPHDLPEWLKNKLAFLLEQGVRTNRYPEGDPLALKAAIAEYCGVTSEMVCVGNGSDELIRSLITATCLGGRGTVASAEPTFSMYRILAETLAVPYIGVARTANYGVDADVLEAAVGANGVRVLFLANPNSPTGNLLSDEIIERLGSLPVLVVLDEAYYEFSRFSAVPLLWERPNLVILRTFSKAFRLANFRVGYALANPEIAAVLEKVRLPYNLPGLSQLAAFAALEHRDVLLAAIPEILAERRRIERFLADFEQLELFPSDANFLFVRPRIADPEAVRVALAGRGSLVRGAAGGLRVTVGTPEQNDRLIANVAALFTPEMR.

An N6-(pyridoxal phosphate)lysine modification is found at Lys-214.

The protein belongs to the class-II pyridoxal-phosphate-dependent aminotransferase family. Histidinol-phosphate aminotransferase subfamily. As to quaternary structure, homodimer. Pyridoxal 5'-phosphate is required as a cofactor.

It carries out the reaction L-histidinol phosphate + 2-oxoglutarate = 3-(imidazol-4-yl)-2-oxopropyl phosphate + L-glutamate. It participates in amino-acid biosynthesis; L-histidine biosynthesis; L-histidine from 5-phospho-alpha-D-ribose 1-diphosphate: step 7/9. This Gloeobacter violaceus (strain ATCC 29082 / PCC 7421) protein is Histidinol-phosphate aminotransferase.